The sequence spans 103 residues: MKRVLTSVVLAPRNAAIAVIGLYRRIVSPLYGDVCRYYPSCSAYGLEAVQEHGLIRGGGLAVWRVCRCHPWAEGGIDDVPARQVQQYRRTRYGFVVAPSHGKG.

This sequence belongs to the UPF0161 family.

It is found in the cell membrane. Could be involved in insertion of integral membrane proteins into the membrane. The polypeptide is Putative membrane protein insertion efficiency factor (Clavibacter sepedonicus (Clavibacter michiganensis subsp. sepedonicus)).